Consider the following 200-residue polypeptide: Small ribosomal subunit protein eS1 (200 aa).

Belongs to the eukaryotic ribosomal protein eS1 family.

The chain is Small ribosomal subunit protein eS1 from Thermococcus gammatolerans (strain DSM 15229 / JCM 11827 / EJ3).